The chain runs to 193 residues: MYQDLIRSELKEAAETLNNFLSDDANIQSIQNAAVLLANAFKAGGKVISCGNGGSHCDAMHFAEELTGRYRENRPGYPAIAISDPSHLSCVSNDFGYDFVFSRYVESLGREGDVLLGISTSGNSGNIIKAIAAAKAKGMKVITLTGKDGGKMAGSADVEIRVPHFGYADRIQEIHIKAIHILIQLIEKEMADQ.

Positions 37–193 (LANAFKAGGK…QLIEKEMADQ (157 aa)) constitute an SIS domain. Substrate is bound at residue 52-54 (NGG). Positions 61 and 65 each coordinate Zn(2+). Substrate contacts are provided by residues E65, 93 to 94 (ND), 119 to 121 (STS), S124, and Q172. Positions 172 and 180 each coordinate Zn(2+).

Belongs to the SIS family. GmhA subfamily. Homotetramer. The cofactor is Zn(2+).

It is found in the cytoplasm. The enzyme catalyses 2 D-sedoheptulose 7-phosphate = D-glycero-alpha-D-manno-heptose 7-phosphate + D-glycero-beta-D-manno-heptose 7-phosphate. Its pathway is carbohydrate biosynthesis; D-glycero-D-manno-heptose 7-phosphate biosynthesis; D-glycero-alpha-D-manno-heptose 7-phosphate and D-glycero-beta-D-manno-heptose 7-phosphate from sedoheptulose 7-phosphate: step 1/1. Catalyzes the isomerization of sedoheptulose 7-phosphate in D-glycero-D-manno-heptose 7-phosphate. The chain is Phosphoheptose isomerase from Pectobacterium atrosepticum (strain SCRI 1043 / ATCC BAA-672) (Erwinia carotovora subsp. atroseptica).